Reading from the N-terminus, the 362-residue chain is Methylthioribose-1-phosphate isomerase (362 aa).

Residue D252 is the Proton donor of the active site.

This sequence belongs to the eIF-2B alpha/beta/delta subunits family. MtnA subfamily.

The protein localises to the cytoplasm. The protein resides in the nucleus. It catalyses the reaction 5-(methylsulfanyl)-alpha-D-ribose 1-phosphate = 5-(methylsulfanyl)-D-ribulose 1-phosphate. The protein operates within amino-acid biosynthesis; L-methionine biosynthesis via salvage pathway; L-methionine from S-methyl-5-thio-alpha-D-ribose 1-phosphate: step 1/6. Its function is as follows. Catalyzes the interconversion of methylthioribose-1-phosphate (MTR-1-P) into methylthioribulose-1-phosphate (MTRu-1-P). This chain is Methylthioribose-1-phosphate isomerase, found in Drosophila mojavensis (Fruit fly).